Reading from the N-terminus, the 336-residue chain is Phosphate acyltransferase (336 aa).

This sequence belongs to the PlsX family. As to quaternary structure, homodimer. Probably interacts with PlsY.

Its subcellular location is the cytoplasm. The enzyme catalyses a fatty acyl-[ACP] + phosphate = an acyl phosphate + holo-[ACP]. It participates in lipid metabolism; phospholipid metabolism. Catalyzes the reversible formation of acyl-phosphate (acyl-PO(4)) from acyl-[acyl-carrier-protein] (acyl-ACP). This enzyme utilizes acyl-ACP as fatty acyl donor, but not acyl-CoA. The chain is Phosphate acyltransferase from Pseudomonas putida (strain ATCC 47054 / DSM 6125 / CFBP 8728 / NCIMB 11950 / KT2440).